A 739-amino-acid chain; its full sequence is MTANRPALPTRDKAVSDLSATEASDEHAALSQEIASHDARYYQEDAPVISDADYDRLRRRYEDIEARFPALKNDDSLSRKVGAAPSAKFAKVVHQVPMLSLQNAFSDEEVEEFVARVRRFLNLAESAELAFTAEPKIDGLSCSLRYEGGVLVRAATRGDGTQGEDVTANVRTIAEIPHRLTGAGVPDIIDIRGEVYMGKADFLALNARQEEAGKPVFANPRNAAAGSLRQLDPEITRSRPLRFFAYAWGQAEPGPPGASQHEVVDAFRRFGLPTNPLTIRVTDAAGLLAHYRKIGAERASLGYDIDGVVYKVDSLALQERLGFVSRSPRWAIAHKFAAEQATTVIEAIEIQVGRTGALTPVAKLTPVTVGGVVVSNATLHNEDYIRAIGGNGEEIREGIDIRVGDTVVVQRAGDVIPQVVSVVLDKRPAGATAYQFPHHCPVCNSQAVREVDPKTGKQDAVRRCTGGLICPAQAVERLRHFVSRNAFDIEGLGEKQAHAFYEWKLIAEPADIFRLQARNEQSLSKLENREGWGRTSAQNLFAAIEARRTIALDRFIFALGIRHVGETNAKRLARHYGSVEALRDAAIGAEMPTEMEEASEETPPTRRRKPQGNEVWQEMTDIDGIGAVVAEAVVEFFREPHNRQVVEELLKEVTPQPLEAVASTSPVSGKTVVFTGSLERMTRDEAKAMAERLGAKVAGSVSGKTDLLVAGPGAGSKLEKARSLGVKTITEDEWFDLVG.

Positions 1–29 (MTANRPALPTRDKAVSDLSATEASDEHAA) are disordered. Residues 51 to 55 (DADYD), 100 to 101 (SL), and Glu-134 contribute to the NAD(+) site. Lys-136 acts as the N6-AMP-lysine intermediate in catalysis. Residues Arg-157, Glu-194, Lys-311, and Lys-335 each contribute to the NAD(+) site. 4 residues coordinate Zn(2+): Cys-440, Cys-443, Cys-464, and Cys-470. The interval 592–612 (PTEMEEASEETPPTRRRKPQG) is disordered. Residues 662–739 (ASTSPVSGKT…TEDEWFDLVG (78 aa)) enclose the BRCT domain.

This sequence belongs to the NAD-dependent DNA ligase family. LigA subfamily. The cofactor is Mg(2+). Requires Mn(2+) as cofactor.

It carries out the reaction NAD(+) + (deoxyribonucleotide)n-3'-hydroxyl + 5'-phospho-(deoxyribonucleotide)m = (deoxyribonucleotide)n+m + AMP + beta-nicotinamide D-nucleotide.. Its function is as follows. DNA ligase that catalyzes the formation of phosphodiester linkages between 5'-phosphoryl and 3'-hydroxyl groups in double-stranded DNA using NAD as a coenzyme and as the energy source for the reaction. It is essential for DNA replication and repair of damaged DNA. This Azorhizobium caulinodans (strain ATCC 43989 / DSM 5975 / JCM 20966 / LMG 6465 / NBRC 14845 / NCIMB 13405 / ORS 571) protein is DNA ligase.